Reading from the N-terminus, the 82-residue chain is Small ribosomal subunit protein bS18 (82 aa).

Belongs to the bacterial ribosomal protein bS18 family. As to quaternary structure, part of the 30S ribosomal subunit. Forms a tight heterodimer with protein bS6.

Binds as a heterodimer with protein bS6 to the central domain of the 16S rRNA, where it helps stabilize the platform of the 30S subunit. The protein is Small ribosomal subunit protein bS18 of Rhizobium meliloti (strain 1021) (Ensifer meliloti).